Here is a 144-residue protein sequence, read N- to C-terminus: Globin (144 aa).

Alanine 1 carries the N-acetylalanine modification. Residues 1–144 (ALSAADAGLL…IISALQSAGK (144 aa)) enclose the Globin domain. Residue histidine 95 participates in heme b binding.

The protein belongs to the globin family. As to quaternary structure, monomer.

This chain is Globin, found in Aplysia juliana (Walking sea hare).